Here is a 153-residue protein sequence, read N- to C-terminus: MSKAMPMAACAMAGVKQMQSLTLPWPSKDLSPNARVHWTRRSKAVKQARGYAEVMARRAGWSGLSLPVEGRLDLWISFYPPTRCLPDDDNMLARFKPYRDGIADALGIDDRRFVSHPLIEDEVRHAGQVVITITGITQQASNGGPRLHAHPAF.

This sequence belongs to the RusA family.

This is an uncharacterized protein from Xylella fastidiosa (strain Temecula1 / ATCC 700964).